The chain runs to 576 residues: Proline--tRNA ligase (576 aa).

Belongs to the class-II aminoacyl-tRNA synthetase family. ProS type 1 subfamily. As to quaternary structure, homodimer.

It is found in the cytoplasm. It carries out the reaction tRNA(Pro) + L-proline + ATP = L-prolyl-tRNA(Pro) + AMP + diphosphate. Catalyzes the attachment of proline to tRNA(Pro) in a two-step reaction: proline is first activated by ATP to form Pro-AMP and then transferred to the acceptor end of tRNA(Pro). As ProRS can inadvertently accommodate and process non-cognate amino acids such as alanine and cysteine, to avoid such errors it has two additional distinct editing activities against alanine. One activity is designated as 'pretransfer' editing and involves the tRNA(Pro)-independent hydrolysis of activated Ala-AMP. The other activity is designated 'posttransfer' editing and involves deacylation of mischarged Ala-tRNA(Pro). The misacylated Cys-tRNA(Pro) is not edited by ProRS. The chain is Proline--tRNA ligase from Leptospira borgpetersenii serovar Hardjo-bovis (strain L550).